A 466-amino-acid chain; its full sequence is Alpha-1A adrenergic receptor (466 aa).

Over methionine 1–isoleucine 27 the chain is Extracellular. Asparagine 7, asparagine 13, and asparagine 22 each carry an N-linked (GlcNAc...) asparagine glycan. A helical membrane pass occupies residues leucine 28–valine 51. Residues alanine 52–tyrosine 64 are Cytoplasmic-facing. A helical membrane pass occupies residues isoleucine 65–isoleucine 88. Over leucine 89 to cysteine 99 the chain is Extracellular. Cysteines 99 and 176 form a disulfide. Residues asparagine 100–isoleucine 122 traverse the membrane as a helical segment. Residues aspartate 123–glycine 143 lie on the Cytoplasmic side of the membrane. A helical transmembrane segment spans residues leucine 144–glutamine 167. Topologically, residues proline 168 to glutamate 181 are extracellular. Residues proline 182–cysteine 205 form a helical membrane-spanning segment. Over arginine 206–threonine 273 the chain is Cytoplasmic. Serine 215 is subject to Phosphoserine; by PKA. The chain crosses the membrane as a helical span at residues leucine 274–phenylalanine 297. The Extracellular segment spans residues phenylalanine 298–glutamate 305. A helical membrane pass occupies residues threonine 306–serine 329. Residues serine 330–valine 466 are Cytoplasmic-facing. The Nuclear localization signal motif lies at lysine 334–lysine 349. Residue cysteine 345 is the site of S-palmitoyl cysteine attachment.

The protein belongs to the G-protein coupled receptor 1 family. Adrenergic receptor subfamily. ADRA1A sub-subfamily. As to quaternary structure, homo- and heterooligomer. Heterooligomerizes with ADRA1B homooligomers in cardiac myocytes. Interacts with CAVIN4.

It is found in the nucleus membrane. It localises to the cell membrane. The protein resides in the cytoplasm. The protein localises to the membrane. Its subcellular location is the caveola. This alpha-adrenergic receptor mediates its action by association with G proteins that activate a phosphatidylinositol-calcium second messenger system. Its effect is mediated by G(q) and G(11) proteins. Nuclear ADRA1A-ADRA1B heterooligomers regulate phenylephrine (PE)-stimulated ERK signaling in cardiac myocytes. The polypeptide is Alpha-1A adrenergic receptor (ADRA1A) (Bos taurus (Bovine)).